The primary structure comprises 691 residues: DNA ligase (691 aa).

NAD(+) is bound by residues D53–D57, S102–L103, and E135. K137 serves as the catalytic N6-AMP-lysine intermediate. Residues R158, E195, K310, and K334 each contribute to the NAD(+) site. C428, C431, C446, and C452 together coordinate Zn(2+). The BRCT domain maps to S613 to E691.

Belongs to the NAD-dependent DNA ligase family. LigA subfamily. Mg(2+) serves as cofactor. The cofactor is Mn(2+).

It catalyses the reaction NAD(+) + (deoxyribonucleotide)n-3'-hydroxyl + 5'-phospho-(deoxyribonucleotide)m = (deoxyribonucleotide)n+m + AMP + beta-nicotinamide D-nucleotide.. DNA ligase that catalyzes the formation of phosphodiester linkages between 5'-phosphoryl and 3'-hydroxyl groups in double-stranded DNA using NAD as a coenzyme and as the energy source for the reaction. It is essential for DNA replication and repair of damaged DNA. The polypeptide is DNA ligase (Psychrobacter cryohalolentis (strain ATCC BAA-1226 / DSM 17306 / VKM B-2378 / K5)).